A 250-amino-acid polypeptide reads, in one-letter code: MPLTLKQEDQVNVSLQSLPRHVAIIMDGNRRWHQQHQTQCTLKQTSGHYYGAKALPSIIESAFSLGIEVLTLFAFSTENFLRSTEEVEELFSLFHSQLDEQFPYLIENKIRLRCIGNLSALPLQLQQKISEISLKTHQNSHRDLVLAINYGGKDELVRAFKKLHQDLVEQKISSDSISEELIRLYLDTSEMPDPDLLIRTGGEMRVSNFLLWQIAYTELYVTDILWPDFKPNHFLDAIKAYQHRSRRGGR.

Residue D27 is part of the active site. D27 contacts Mg(2+). Residues 28–31 (GNRR), W32, H48, and 76–78 (STE) each bind substrate. N79 acts as the Proton acceptor in catalysis. Substrate-binding positions include F80, R82, R199, and 205–207 (RVS). E218 contributes to the Mg(2+) binding site.

This sequence belongs to the UPP synthase family. In terms of assembly, homodimer. Requires Mg(2+) as cofactor.

Its function is as follows. Catalyzes the condensation of isopentenyl diphosphate (IPP) with allylic pyrophosphates generating different type of terpenoids. The sequence is that of Isoprenyl transferase from Chlamydia caviae (strain ATCC VR-813 / DSM 19441 / 03DC25 / GPIC) (Chlamydophila caviae).